Reading from the N-terminus, the 691-residue chain is Elongation factor G (691 aa).

In terms of domain architecture, tr-type G spans 8-282 (ERVRNIGIAA…AVVDYLPAPI (275 aa)). Residues 17-24 (AHIDAGKT), 81-85 (DTPGH), and 135-138 (NKMD) contribute to the GTP site.

The protein belongs to the TRAFAC class translation factor GTPase superfamily. Classic translation factor GTPase family. EF-G/EF-2 subfamily.

Its subcellular location is the cytoplasm. Its function is as follows. Catalyzes the GTP-dependent ribosomal translocation step during translation elongation. During this step, the ribosome changes from the pre-translocational (PRE) to the post-translocational (POST) state as the newly formed A-site-bound peptidyl-tRNA and P-site-bound deacylated tRNA move to the P and E sites, respectively. Catalyzes the coordinated movement of the two tRNA molecules, the mRNA and conformational changes in the ribosome. This is Elongation factor G from Synechococcus sp. (strain CC9311).